The following is a 783-amino-acid chain: Cation/H(+) antiporter 11 (783 aa).

Transmembrane regions (helical) follow at residues Val-31–Ile-51, Ile-61–Phe-81, Ala-101–Val-120, Val-135–Phe-155, Val-175–Leu-195, Leu-205–Thr-225, Ala-244–Ile-264, Ile-276–Phe-295, Val-300–Ala-322, Ile-360–Tyr-380, Leu-389–Val-409, and Ala-418–Val-438.

The protein belongs to the monovalent cation:proton antiporter 2 (CPA2) transporter (TC 2.A.37) family. CHX (TC 2.A.37.4) subfamily. As to expression, specifically expressed in pollen.

It localises to the membrane. Its function is as follows. May operate as a cation/H(+) antiporter. The chain is Cation/H(+) antiporter 11 (CHX11) from Arabidopsis thaliana (Mouse-ear cress).